We begin with the raw amino-acid sequence, 245 residues long: Collagen triple helix repeat-containing protein 1 (245 aa).

The signal sequence occupies residues 1–32 (MHPQGRAAPPQLLLGLFLVLLLLLQLSAPISA). Positions 59 to 92 (QGPAGVPGRDGSPGANGIPGTPGIPGRDGFKGEK) constitute a Collagen-like domain. Positions 64 to 87 (VPGRDGSPGANGIPGTPGIPGRDG) are disordered. Asn-188 is a glycosylation site (N-linked (GlcNAc...) asparagine).

N-glycosylated.

The protein resides in the secreted. It is found in the extracellular space. Its subcellular location is the extracellular matrix. In terms of biological role, may act as a negative regulator of collagen matrix deposition. The chain is Collagen triple helix repeat-containing protein 1 (Cthrc1) from Mus musculus (Mouse).